We begin with the raw amino-acid sequence, 240 residues long: 4-hydroxy-tetrahydrodipicolinate reductase (240 aa).

Residues 79–81 (ATT) and 103–106 (SANM) each bind NAD(+). The active-site Proton donor/acceptor is His135. (S)-2,3,4,5-tetrahydrodipicolinate is bound at residue His136. Catalysis depends on Lys139, which acts as the Proton donor. 145–146 (GT) contributes to the (S)-2,3,4,5-tetrahydrodipicolinate binding site.

Belongs to the DapB family.

Its subcellular location is the cytoplasm. The enzyme catalyses (S)-2,3,4,5-tetrahydrodipicolinate + NAD(+) + H2O = (2S,4S)-4-hydroxy-2,3,4,5-tetrahydrodipicolinate + NADH + H(+). The catalysed reaction is (S)-2,3,4,5-tetrahydrodipicolinate + NADP(+) + H2O = (2S,4S)-4-hydroxy-2,3,4,5-tetrahydrodipicolinate + NADPH + H(+). It participates in amino-acid biosynthesis; L-lysine biosynthesis via DAP pathway; (S)-tetrahydrodipicolinate from L-aspartate: step 4/4. Its function is as follows. Catalyzes the conversion of 4-hydroxy-tetrahydrodipicolinate (HTPA) to tetrahydrodipicolinate. This chain is 4-hydroxy-tetrahydrodipicolinate reductase, found in Staphylococcus aureus (strain JH1).